The primary structure comprises 468 residues: Sorting and assembly machinery component 50 homolog (468 aa).

Positions 1-24 (MGTVHARSLDPLPMNGPDFGSHDD) are disordered. The 81-residue stretch at 44-124 (VVVQRVHFEG…LDVTFEVTEL (81 aa)) folds into the POTRA domain.

It belongs to the SAM50/omp85 family. In terms of assembly, associates with the mitochondrial contact site and cristae organizing system (MICOS) complex (also known as MINOS or MitOS complex).

It is found in the mitochondrion outer membrane. Its function is as follows. May play a role in the maintenance of the structure of mitochondrial cristae. This chain is Sorting and assembly machinery component 50 homolog (samm50), found in Xenopus tropicalis (Western clawed frog).